The following is a 284-amino-acid chain: MAGCAARAPPGSEARLSLATFLLGASVLALPLLTRAGLQGRTGLALYVAGLNALLLLLYRPPRYQIAIRACFLGFVFGCGTLLSFSQSSWSHFGWYMCSLSLFHYSEYLVTAVNNPKSLSLDSFLLNHSLEYTVAALSSWLEFTLENIFWPELKQITWLSVTGLLMVVFGECLRKAAMFTAGSNFNHVVQNEKSDTHTLVTSGVYAWFRHPSYVGWFYWSIGTQVMLCNPICGVSYALTVWRFFRDRTEEEEISLIHFFGEEYLEYKKRVPTGLPFIKGVKVDL.

Residues 1 to 16 (MAGCAARAPPGSEARL) are Cytoplasmic-facing. A helical membrane pass occupies residues 17-33 (SLATFLLGASVLALPLL). Residues 34–41 (TRAGLQGR) lie on the Lumenal side of the membrane. The chain crosses the membrane as a helical span at residues 42–59 (TGLALYVAGLNALLLLLY). The Cytoplasmic segment spans residues 60-69 (RPPRYQIAIR). A helical membrane pass occupies residues 70–87 (ACFLGFVFGCGTLLSFSQ). Residues 88-92 (SSWSH) lie on the Lumenal side of the membrane. Residues 93 to 112 (FGWYMCSLSLFHYSEYLVTA) form a helical membrane-spanning segment. The Cytoplasmic portion of the chain corresponds to 113–131 (VNNPKSLSLDSFLLNHSLE). Residues 132–149 (YTVAALSSWLEFTLENIF) traverse the membrane as a helical segment. The Lumenal portion of the chain corresponds to 150–154 (WPELK). A helical membrane pass occupies residues 155-174 (QITWLSVTGLLMVVFGECLR). Residues 175-212 (KAAMFTAGSNFNHVVQNEKSDTHTLVTSGVYAWFRHPS) lie on the Cytoplasmic side of the membrane. S-adenosyl-L-methionine is bound by residues Gln190, 197 to 200 (HTLV), Tyr205, and 210 to 213 (HPSY). The helical transmembrane segment at 213 to 228 (YVGWFYWSIGTQVMLC) threads the bilayer. Residue Asn229 is a topological domain, lumenal. A helical transmembrane segment spans residues 230 to 244 (PICGVSYALTVWRFF). Residues 245–284 (RDRTEEEEISLIHFFGEEYLEYKKRVPTGLPFIKGVKVDL) lie on the Cytoplasmic side of the membrane. Residue Arg247 participates in substrate binding. Glu251 is a binding site for S-adenosyl-L-methionine.

The protein belongs to the class VI-like SAM-binding methyltransferase superfamily. Isoprenylcysteine carboxyl methyltransferase family. Ubiquitously expressed. Expressed at higher levels in the cerebellum and putamen than in other brain regions. Abundant expression seen in the Purkinje cells and pontine neurons.

Its subcellular location is the endoplasmic reticulum membrane. It catalyses the reaction [protein]-C-terminal S-[(2E,6E)-farnesyl]-L-cysteine + S-adenosyl-L-methionine = [protein]-C-terminal S-[(2E,6E)-farnesyl]-L-cysteine methyl ester + S-adenosyl-L-homocysteine. Competitively inhibited by N-acetyl-S-trans,trans-farnesyl-l-cysteine (AFC). Its function is as follows. Catalyzes the post-translational methylation of isoprenylated C-terminal cysteine residues. The polypeptide is Protein-S-isoprenylcysteine O-methyltransferase (ICMT) (Homo sapiens (Human)).